Reading from the N-terminus, the 72-residue chain is Large ribosomal subunit protein uL29 (72 aa).

It belongs to the universal ribosomal protein uL29 family.

This chain is Large ribosomal subunit protein uL29 (rpmC), found in Treponema pallidum (strain Nichols).